Consider the following 289-residue polypeptide: uncharacterized protein (289 aa).

Positions 1–19 (MAKWLGAPLARGVSTATRA) are cleaved as a signal peptide. Transmembrane regions (helical) follow at residues 90-110 (GLLA…GWGV) and 257-277 (AALS…LVFA).

It is found in the cell membrane. This is an uncharacterized protein from Mycobacterium tuberculosis (strain CDC 1551 / Oshkosh).